A 363-amino-acid polypeptide reads, in one-letter code: MTSAQRKDDHVRLAIEQHNAHSGRNQFDDVSFVHHALAGIDRPDVSLATSFAGISWQVPIYINAMTGGSEKTGLINRDLATAARETGVPIASGSMNAYIKDPSCADTFRVLRDENPNGFVIANINATTTVDNAQRAIDLIEANALQIHINTAQETPMPEGDRSFASWVPQIEKIAAAVDIPVIVKEVGNGLSRQTILLLADLGVQAADVSGRGGTDFARIENGRRELGDYAFLHGWGQSTAACLLDAQDISLPVLASGGVRHPLDVVRALALGARAVGSSAGFLRTLMDDGVDALITKLTTWLDQLAALQTMLGARTPADLTRCDVLLHGELRDFCADRGIDTRRLAQRSSSIEALQTTGSTR.

6–7 contributes to the substrate binding site; that stretch reads RK. Residues 64-66, Ser-94, and Asn-123 each bind FMN; that span reads AMT. Gln-153 serves as a coordination point for substrate. Mg(2+) is bound at residue Glu-154. Residues Lys-185, Ser-210, Thr-215, 259–261, and 280–281 contribute to the FMN site; these read GVR and SA.

The protein belongs to the IPP isomerase type 2 family. As to quaternary structure, homooctamer. Dimer of tetramers. Mg(2+) serves as cofactor. The cofactor is FMN. It depends on NADPH as a cofactor.

The protein resides in the cytoplasm. The catalysed reaction is isopentenyl diphosphate = dimethylallyl diphosphate. Functionally, involved in the biosynthesis of isoprenoids. Catalyzes the 1,3-allylic rearrangement of the homoallylic substrate isopentenyl (IPP) to its allylic isomer, dimethylallyl diphosphate (DMAPP). This chain is Isopentenyl-diphosphate delta-isomerase, found in Streptomyces sp. (strain CL190).